Reading from the N-terminus, the 933-residue chain is Dual 3',5'-cyclic-AMP and -GMP phosphodiesterase 11A (933 aa).

Residues 42 to 125 (HSQGQGALGP…ASQKELRKSF (84 aa)) are disordered. S162, S163, and S239 each carry phosphoserine. GAF domains follow at residues 217–370 (DLTS…GIAI) and 402–558 (DLEK…GLGI). S424 contacts 3',5'-cyclic GMP. The PDEase domain occupies 588 to 912 (SKAEVDKFKA…SKWEELHQKR (325 aa)). The Proton donor role is filled by H664. Residues H668, H704, D705, and D816 each coordinate a divalent metal cation.

It belongs to the cyclic nucleotide phosphodiesterase family. A divalent metal cation serves as cofactor. As to expression, isoform 1 is present in prostate, pituitary, heart and liver. It is however not present in testis nor in penis, suggesting that weak inhibition by Tadalafil (Cialis) is not relevant (at protein level). Isoform 2 may be expressed in testis. Isoform 4 is expressed in adrenal cortex.

The protein resides in the cytoplasm. The protein localises to the cytosol. The enzyme catalyses 3',5'-cyclic GMP + H2O = GMP + H(+). It carries out the reaction 3',5'-cyclic AMP + H2O = AMP + H(+). Inhibited by 3-isobutyl-1-methylxanthine (IBMX), zaprinast and dipyridamole. cGMP acts as an allosteric activator. Weakly inhibited by Sildenafil (Viagra) and Tadalafil (Cialis); however, the fact that the protein is probably absent from testis, suggests that it is not biologically relevant and is not related with erectile dysfunction. Its function is as follows. Plays a role in signal transduction by regulating the intracellular concentration of cyclic nucleotides cAMP and cGMP. Catalyzes the hydrolysis of both cAMP and cGMP to 5'-AMP and 5'-GMP, respectively. This Homo sapiens (Human) protein is Dual 3',5'-cyclic-AMP and -GMP phosphodiesterase 11A.